The sequence spans 236 residues: Ribonuclease 3 (236 aa).

The region spanning 13–138 (TEKVFKISGY…LIGAIYVDGG (126 aa)) is the RNase III domain. Residue glutamate 51 coordinates Mg(2+). The active site involves aspartate 55. Mg(2+)-binding residues include asparagine 124 and glutamate 127. Glutamate 127 is an active-site residue. The DRBM domain occupies 164–232 (DAKTALQEWA…AKLMLEKVTK (69 aa)).

The protein belongs to the ribonuclease III family. In terms of assembly, homodimer. It depends on Mg(2+) as a cofactor.

The protein localises to the cytoplasm. It carries out the reaction Endonucleolytic cleavage to 5'-phosphomonoester.. Its function is as follows. Digests double-stranded RNA. Involved in the processing of primary rRNA transcript to yield the immediate precursors to the large and small rRNAs (23S and 16S). Processes some mRNAs, and tRNAs when they are encoded in the rRNA operon. Processes pre-crRNA and tracrRNA of type II CRISPR loci if present in the organism. This chain is Ribonuclease 3, found in Anaplasma phagocytophilum (strain HZ).